Consider the following 1116-residue polypeptide: Cation channel sperm-associated auxiliary subunit beta (1116 aa).

Residues 1-1053 (MESPLIYVSV…QIYVDEAPLP (1053 aa)) are Extracellular-facing. A disulfide bridge connects residues Cys35 and Cys60. N-linked (GlcNAc...) asparagine glycosylation is found at Asn90, Asn100, Asn118, Asn226, and Asn321. The cysteines at positions 189 and 302 are disulfide-linked. Cys330 and Cys343 are oxidised to a cystine. Asn618 and Asn690 each carry an N-linked (GlcNAc...) asparagine glycan. 4 disulfide bridges follow: Cys718-Cys816, Cys829-Cys1037, Cys911-Cys920, and Cys922-Cys937. N-linked (GlcNAc...) asparagine glycans are attached at residues Asn913 and Asn921. N-linked (GlcNAc...) asparagine glycans are attached at residues Asn1010 and Asn1015. The chain crosses the membrane as a helical span at residues 1054 to 1076 (FPGHTLIAVATAVVLGGLIFIAF). The Cytoplasmic portion of the chain corresponds to 1077–1116 (MFQLQGIHPWRTFQRWIRRNQEKFSSISLSELIHRSKSEE).

Component of the CatSper complex or CatSpermasome composed of the core pore-forming members CATSPER1, CATSPER2, CATSPER3 and CATSPER4 as well as auxiliary members CATSPERB, CATSPERG, CATSPERD, CATSPERE, CATSPERZ, C2CD6/CATSPERT, TMEM249, TMEM262 and EFCAB9. HSPA1 may be an additional auxiliary complex member. The core complex members CATSPER1, CATSPER2, CATSPER3 and CATSPER4 form a heterotetrameric channel. The auxiliary CATSPERB, CATSPERG, CATSPERD and CATSPERE subunits form a pavilion-like structure over the pore which stabilizes the complex through interactions with CATSPER4, CATSPER3, CATSPER1 and CATSPER2 respectively. TMEM262/CATSPERH interacts with CATSPERB, further stabilizing the complex. C2CD6/CATSPERT interacts at least with CATSPERD and is required for targeting the CatSper complex in the flagellar membrane.

Its subcellular location is the cell projection. It localises to the cilium. It is found in the flagellum membrane. Auxiliary component of the CatSper complex, a complex involved in sperm cell hyperactivation. Sperm cell hyperactivation is needed for sperm motility which is essential late in the preparation of sperm for fertilization. In Homo sapiens (Human), this protein is Cation channel sperm-associated auxiliary subunit beta.